The sequence spans 251 residues: GTP cyclohydrolase 1 type 2 homolog (251 aa).

A divalent metal cation contacts are provided by His62, His63, Asp103, His215, and Glu219.

Belongs to the GTP cyclohydrolase I type 2/NIF3 family. Homohexamer.

The polypeptide is GTP cyclohydrolase 1 type 2 homolog (Mycoplasmopsis pulmonis (strain UAB CTIP) (Mycoplasma pulmonis)).